Consider the following 271-residue polypeptide: tRNA (guanine-N(1)-)-methyltransferase (271 aa).

S-adenosyl-L-methionine-binding positions include G120 and I145–L150.

This sequence belongs to the RNA methyltransferase TrmD family. In terms of assembly, homodimer.

Its subcellular location is the cytoplasm. It carries out the reaction guanosine(37) in tRNA + S-adenosyl-L-methionine = N(1)-methylguanosine(37) in tRNA + S-adenosyl-L-homocysteine + H(+). Its function is as follows. Specifically methylates guanosine-37 in various tRNAs. The polypeptide is tRNA (guanine-N(1)-)-methyltransferase (Bifidobacterium longum (strain NCC 2705)).